Consider the following 157-residue polypeptide: Transcriptional repressor NrdR (157 aa).

Residues 1–21 (MRCPYCSSEDSQVKDSRPAED) are disordered. The segment at 3 to 34 (CPYCSSEDSQVKDSRPAEDGNAIRRRRICPDC) is a zinc-finger region. Residues 11-21 (SQVKDSRPAED) are compositionally biased toward basic and acidic residues. Residues 49–139 (LMIIKKTGRK…VYRDFSHAED (91 aa)) enclose the ATP-cone domain.

The protein belongs to the NrdR family. Requires Zn(2+) as cofactor.

Negatively regulates transcription of bacterial ribonucleotide reductase nrd genes and operons by binding to NrdR-boxes. The polypeptide is Transcriptional repressor NrdR (Sinorhizobium fredii (strain NBRC 101917 / NGR234)).